The following is a 299-amino-acid chain: Recombination-associated protein RdgC (299 aa).

The protein belongs to the RdgC family.

The protein localises to the cytoplasm. It is found in the nucleoid. May be involved in recombination. This chain is Recombination-associated protein RdgC, found in Laribacter hongkongensis (strain HLHK9).